A 369-amino-acid polypeptide reads, in one-letter code: Glycine oxidase (369 aa).

FAD is bound by residues 14 to 15 (II), 34 to 35 (ES), 42 to 43 (TT), 47 to 49 (AGM), and valine 174. Substrate is bound by residues arginine 302 and arginine 329. FAD is bound at residue 327 to 333 (HFRNGIL).

It belongs to the DAO family. ThiO subfamily. Homotetramer. FAD is required as a cofactor.

It is found in the cytoplasm. It catalyses the reaction glycine + O2 + H2O = glyoxylate + H2O2 + NH4(+). It carries out the reaction N-ethylglycine + O2 + H2O = ethylamine + glyoxylate + H2O2. The enzyme catalyses sarcosine + O2 + H2O = methylamine + glyoxylate + H2O2. The catalysed reaction is D-alanine + O2 + H2O = pyruvate + H2O2 + NH4(+). It catalyses the reaction glyphosate + O2 + H2O = aminomethylphosphonate + glyoxylate + H2O2 + H(+). It participates in cofactor biosynthesis; thiamine diphosphate biosynthesis. With respect to regulation, is competitively inhibited by glycolate. In terms of biological role, catalyzes the FAD-dependent oxidative deamination of various amines and D-amino acids to yield the corresponding alpha-keto acids, ammonia/amine, and hydrogen peroxide. Oxidizes sarcosine (N-methylglycine), N-ethylglycine and glycine. Can also oxidize the herbicide glyphosate (N-phosphonomethylglycine). Displays lower activities on D-alanine, D-valine, D-proline and D-methionine. Does not act on L-amino acids and other D-amino acids. Is essential for thiamine biosynthesis since the oxidation of glycine catalyzed by ThiO generates the glycine imine intermediate (dehydroglycine) required for the biosynthesis of the thiazole ring of thiamine pyrophosphate. This chain is Glycine oxidase, found in Bacillus subtilis (strain 168).